The following is a 228-amino-acid chain: Ornithine decarboxylase antizyme 1 (228 aa).

The disordered stretch occupies residues 17-55 (REKEGDKPSATIHASRTMPLLSLHSRGGSSSESSRVSLH). A compositionally biased stretch (low complexity) spans 36–55 (LLSLHSRGGSSSESSRVSLH).

The protein belongs to the ODC antizyme family. Interacts with ODC1 and thereby sterically blocks ODC homodimerization. Forms a ternary complex with PSMB4 and OAZ1 before PSMB4 is incorporated into the 20S proteasome. Interacts with AZIN2; this interaction disrupts the interaction between the antizyme and ODC1. Interacts with FAM171A1.

Its function is as follows. Ornithine decarboxylase (ODC) antizyme protein that negatively regulates ODC activity and intracellular polyamine biosynthesis and uptake in response to increased intracellular polyamine levels. Binds to ODC monomers, inhibiting the assembly of the functional ODC homodimer, and targets the monomers for ubiquitin-independent proteolytic destruction by the 26S proteasome. Triggers ODC degradation by inducing the exposure of a cryptic proteasome-interacting surface of ODC. Stabilizes AZIN2 by interfering with its ubiquitination. Also inhibits cellular uptake of polyamines by inactivating the polyamine uptake transporter. SMAD1/OAZ1/PSMB4 complex mediates the degradation of the CREBBP/EP300 repressor SNIP1. Involved in the translocation of AZIN2 from ER-Golgi intermediate compartment (ERGIC) to the cytosol. The protein is Ornithine decarboxylase antizyme 1 (OAZ1) of Homo sapiens (Human).